A 274-amino-acid chain; its full sequence is Bis(5'-nucleosyl)-tetraphosphatase, symmetrical (274 aa).

Belongs to the Ap4A hydrolase family.

The enzyme catalyses P(1),P(4)-bis(5'-adenosyl) tetraphosphate + H2O = 2 ADP + 2 H(+). In terms of biological role, hydrolyzes diadenosine 5',5'''-P1,P4-tetraphosphate to yield ADP. In Shewanella baltica (strain OS223), this protein is Bis(5'-nucleosyl)-tetraphosphatase, symmetrical.